The primary structure comprises 114 residues: Anti-adapter protein IraM (114 aa).

This sequence belongs to the IraM/RssC family.

Its subcellular location is the cytoplasm. Functionally, involved in the stabilization of the sigma stress factor RpoS. The protein is Anti-adapter protein IraM of Citrobacter koseri (strain ATCC BAA-895 / CDC 4225-83 / SGSC4696).